A 126-amino-acid polypeptide reads, in one-letter code: Probable prefoldin subunit 4 (126 aa).

It belongs to the prefoldin subunit beta family. As to quaternary structure, heterohexamer of two PFD-alpha type and four PFD-beta type subunits.

Binds specifically to cytosolic chaperonin (c-CPN) and transfers target proteins to it. Binds to nascent polypeptide chain and promotes folding in an environment in which there are many competing pathways for nonnative proteins. Appears to play a non-essential role. In Caenorhabditis briggsae, this protein is Probable prefoldin subunit 4.